A 258-amino-acid chain; its full sequence is Ribosomal RNA small subunit methyltransferase J (258 aa).

S-adenosyl-L-methionine is bound by residues 107 to 108, 123 to 124, 159 to 160, and Asp-177; these read RD, ER, and SS.

Belongs to the methyltransferase superfamily. RsmJ family.

The protein localises to the cytoplasm. It catalyses the reaction guanosine(1516) in 16S rRNA + S-adenosyl-L-methionine = N(2)-methylguanosine(1516) in 16S rRNA + S-adenosyl-L-homocysteine + H(+). Its function is as follows. Specifically methylates the guanosine in position 1516 of 16S rRNA. In Shewanella sediminis (strain HAW-EB3), this protein is Ribosomal RNA small subunit methyltransferase J.